The primary structure comprises 808 residues: MPPAAMAPPPPPQGSSTGDPLYDELWHACAGPLVTVPRVGDLVFYFPQGHIEQVEASMNQVADSQMRLYDLPSKLLCRVLNVELKAEQDTDEVYAQVMLMPEPEQNEMAVEKTTPTSGPVQARPPVRSFCKTLTASDTSTHGGFSVLRRHADECLPPLDMTQSPPTQELVAKDLHSMDWRFRHIFRGQPRRHLLQSGWSVFVSSKRLVAGDAFIFLRGENGELRVGVRRAMRQLSNVPSSVISSQSMHLGVLATAWHAINTKSMFTVYYKPRTSPSEFIIPYDQYMESVKNNYSVGMRFRMRFEGEEAPEQRFTGTIIGSENLDPVWPESSWRSLKVRWDEPSTIPRPDRVSPWKIEPASSPPVNPLPLSRVKRPRPNAPPASPESPILTKEAATKVDTDPAQAQRSQNSTVLQGQEQMTLRSNLTESNDSDVTAHKPMMWSPSPNAAKAHPLTFQQRPPMDNWMQLGRRETDFKDVRSGSQSFGDSPGFFMQNFDEAPNRLTSFKNQFQDQGSARHFSDPYYYVSPQPSLTVESSTQMHTDSKELHFWNGQSTVYGNSRDRPQNFRFEQNSSSWLNQSFARPEQPRVIRPHASIAPVELEKTEGSGFKIFGFKVDTTNAPNNHLSSPMAATHEPMLQTPSSLNQLQPVQTDCIPEVSVSTAGTATENEKSGQQAQQSSKDVQSKTQVASTRSCTKVHKQGVALGRSVDLSKFSNYDELKAELDKMFEFDGELVSSNKNWQIVYTDNEGDMMLVGDDPWEEFCSIVRKIYIYTKEEVQKMNSKSNAPRKDDSSENEKGHLPMPNKSDN.

Pro residues predominate over residues Met-1–Gln-13. Residues Met-1–Pro-20 are disordered. The TF-B3 DNA-binding region spans Phe-129 to Met-231. Residues Pro-342–Ser-352 show a composition bias toward basic and acidic residues. Disordered regions lie at residues Pro-342–Val-433, Thr-661–Thr-691, and Gln-778–Asn-808. A compositionally biased stretch (polar residues) spans Ala-402–Asp-432. In terms of domain architecture, PB1 spans Arg-692–Asn-785. The segment covering Pro-787–His-799 has biased composition (basic and acidic residues).

The protein belongs to the ARF family. As to quaternary structure, homodimers and heterodimers. As to expression, expressed in roots, culms, leaves and young panicles.

Its subcellular location is the nucleus. Functionally, auxin response factors (ARFs) are transcriptional factors that bind specifically to the DNA sequence 5'-TGTCTC-3' found in the auxin-responsive promoter elements (AuxREs). The chain is Auxin response factor 4 (ARF4) from Oryza sativa subsp. japonica (Rice).